The primary structure comprises 210 residues: Mitochondrial coenzyme A diphosphatase NUDT8 (210 aa).

Residues 25–172 (LRSRPAAAAV…HFSYTLPVFL (148 aa)) form the Nudix hydrolase domain. N6-succinyllysine is present on Lys70. The Nudix box signature appears at 70-91 (KCDPDDQDVIHTALRETQEELG). 2 residues coordinate Mg(2+): Glu85 and Glu89. Lys96 is subject to N6-succinyllysine.

The protein belongs to the Nudix hydrolase family. In terms of assembly, monomer. Mg(2+) serves as cofactor. The cofactor is Mn(2+). In terms of tissue distribution, expressed at the highest levels in the kidneys, heart, brown adipose tissue and liver (at protein level). Expressed at lower levels in the brain, skeletal muscle, and white adipose tissue (at protein level).

It is found in the mitochondrion. The enzyme catalyses an acyl-CoA + H2O = an acyl-4'-phosphopantetheine + adenosine 3',5'-bisphosphate + 2 H(+). The catalysed reaction is CoA + H2O = (R)-4'-phosphopantetheine + adenosine 3',5'-bisphosphate + 2 H(+). It carries out the reaction acetyl-CoA + H2O = S-acetyl-4'-phosphopantetheine + adenosine 3',5'-bisphosphate + 2 H(+). It catalyses the reaction butanoyl-CoA + H2O = S-butanoyl-4'-phosphopantetheine + adenosine 3',5'-bisphosphate + 2 H(+). The enzyme catalyses hexanoyl-CoA + H2O = hexanoyl-4'-phosphopantetheine + adenosine 3',5'-bisphosphate + 2 H(+). The catalysed reaction is octanoyl-CoA + H2O = S-octanoyl-4'-phosphopantetheine + adenosine 3',5'-bisphosphate + 2 H(+). It carries out the reaction propanoyl-CoA + H2O = propanoyl-4'-phosphopantetheine + adenosine 3',5'-bisphosphate + 2 H(+). It catalyses the reaction malonyl-CoA + H2O = malonyl-4'-phosphopantetheine + adenosine 3',5'-bisphosphate + 2 H(+). The enzyme catalyses succinyl-CoA + H2O = succinyl-4'-phosphopantetheine + adenosine 3',5'-bisphosphate + 2 H(+). The catalysed reaction is a 5'-end CoA-ribonucleoside in mRNA + H2O = a 5'-end phospho-adenosine-phospho-ribonucleoside in mRNA + (R)-4'-phosphopantetheine + 2 H(+). Acyl-CoA diphosphatase that mediates the hydrolysis of a wide range of CoA and CoA esters yielding 3',5'-ADP and the corresponding 4'-phosphopantetheine derivative as products. Hydrolyzes short- and medium-chain acyl-CoAs, exhibiting the highest activity toward free CoA, hexanoyl-CoA, and octanoyl-CoA and the lowest activity against acetyl-CoA. Exhibits decapping activity towards dpCoA-capped RNAs in vitro. In Mus musculus (Mouse), this protein is Mitochondrial coenzyme A diphosphatase NUDT8 (Nudt8).